The primary structure comprises 156 residues: Small ribosomal subunit protein uS7 (156 aa).

The protein belongs to the universal ribosomal protein uS7 family. As to quaternary structure, part of the 30S ribosomal subunit. Contacts proteins S9 and S11.

Functionally, one of the primary rRNA binding proteins, it binds directly to 16S rRNA where it nucleates assembly of the head domain of the 30S subunit. Is located at the subunit interface close to the decoding center, probably blocks exit of the E-site tRNA. The sequence is that of Small ribosomal subunit protein uS7 from Paracoccus denitrificans (strain Pd 1222).